A 482-amino-acid chain; its full sequence is Cardiolipin synthase (482 aa).

Helical transmembrane passes span 4–24 (LAYL…VTVF) and 34–54 (WAWL…YLIF). PLD phosphodiesterase domains lie at 217–244 (LNYR…GDEY) and 395–422 (DNGF…DFRS). Active-site residues include H222, K224, D229, H400, K402, and D407.

Belongs to the phospholipase D family. Cardiolipin synthase subfamily.

It is found in the cell membrane. It catalyses the reaction 2 a 1,2-diacyl-sn-glycero-3-phospho-(1'-sn-glycerol) = a cardiolipin + glycerol. Functionally, catalyzes the reversible phosphatidyl group transfer from one phosphatidylglycerol molecule to another to form cardiolipin (CL) (diphosphatidylglycerol) and glycerol. This is Cardiolipin synthase (cls) from Listeria innocua serovar 6a (strain ATCC BAA-680 / CLIP 11262).